The sequence spans 270 residues: Acyl-[acyl-carrier-protein]--UDP-N-acetylglucosamine O-acyltransferase (270 aa).

It belongs to the transferase hexapeptide repeat family. LpxA subfamily. Homotrimer.

It localises to the cytoplasm. It catalyses the reaction a (3R)-hydroxyacyl-[ACP] + UDP-N-acetyl-alpha-D-glucosamine = a UDP-3-O-[(3R)-3-hydroxyacyl]-N-acetyl-alpha-D-glucosamine + holo-[ACP]. It participates in glycolipid biosynthesis; lipid IV(A) biosynthesis; lipid IV(A) from (3R)-3-hydroxytetradecanoyl-[acyl-carrier-protein] and UDP-N-acetyl-alpha-D-glucosamine: step 1/6. Functionally, involved in the biosynthesis of lipid A, a phosphorylated glycolipid that anchors the lipopolysaccharide to the outer membrane of the cell. The polypeptide is Acyl-[acyl-carrier-protein]--UDP-N-acetylglucosamine O-acyltransferase (Helicobacter pylori (strain Shi470)).